Consider the following 367-residue polypeptide: Phosphoribosylaminoimidazole-succinocarboxamide synthase (367 aa).

This sequence belongs to the SAICAR synthetase family.

The enzyme catalyses 5-amino-1-(5-phospho-D-ribosyl)imidazole-4-carboxylate + L-aspartate + ATP = (2S)-2-[5-amino-1-(5-phospho-beta-D-ribosyl)imidazole-4-carboxamido]succinate + ADP + phosphate + 2 H(+). Its pathway is purine metabolism; IMP biosynthesis via de novo pathway; 5-amino-1-(5-phospho-D-ribosyl)imidazole-4-carboxamide from 5-amino-1-(5-phospho-D-ribosyl)imidazole-4-carboxylate: step 1/2. The chain is Phosphoribosylaminoimidazole-succinocarboxamide synthase from Psychromonas ingrahamii (strain DSM 17664 / CCUG 51855 / 37).